Reading from the N-terminus, the 432-residue chain is Adenylosuccinate synthetase (432 aa).

GTP is bound by residues 13–19 and 41–43; these read GDEGKGK and GHT. Asp-14 functions as the Proton acceptor in the catalytic mechanism. Mg(2+) contacts are provided by Asp-14 and Gly-41. IMP is bound by residues 14–17, 39–42, Thr-130, Arg-144, Gln-225, Thr-240, and Arg-304; these read DEGK and NAGH. The active-site Proton donor is His-42. 300–306 provides a ligand contact to substrate; that stretch reads ATTGRRR. GTP contacts are provided by residues Arg-306, 332–334, and 415–417; these read KLD and STG.

Belongs to the adenylosuccinate synthetase family. As to quaternary structure, homodimer. The cofactor is Mg(2+).

Its subcellular location is the cytoplasm. It carries out the reaction IMP + L-aspartate + GTP = N(6)-(1,2-dicarboxyethyl)-AMP + GDP + phosphate + 2 H(+). Its pathway is purine metabolism; AMP biosynthesis via de novo pathway; AMP from IMP: step 1/2. Its function is as follows. Plays an important role in the de novo pathway of purine nucleotide biosynthesis. Catalyzes the first committed step in the biosynthesis of AMP from IMP. The chain is Adenylosuccinate synthetase from Edwardsiella ictaluri (strain 93-146).